Reading from the N-terminus, the 2200-residue chain is Non-reducing polyketide synthase tpeB (2200 aa).

One can recognise a Starter acyltransferase (SAT) domain in the interval 16–255 (FFGDQTVDTL…MDLPLGTPAH (240 aa)). The Ketosynthase family 3 (KS3) domain maps to 382-815 (SNMIAIVGQS…GGNNCVLLEE (434 aa)). Active-site for beta-ketoacyl synthase activity residues include Cys554, His690, and His729. One can recognise a Malonyl-CoA:ACP transacylase (MAT) domain in the interval 914–1202 (VFAFTGQGSQ…VLNSFIKATL (289 aa)). The interval 1296–1621 (TASLQRVREE…TKRILTTILG (326 aa)) is product template (PT) domain. An N-terminal hotdog fold region spans residues 1300-1433 (QRVREERIQG…CKIRFESKAD (134 aa)). One can recognise a PKS/mFAS DH domain in the interval 1300 to 1617 (QRVREERIQG…FQRLTKRILT (318 aa)). His1332 acts as the Proton acceptor; for dehydratase activity in catalysis. Residues 1462–1617 (NGHKLPKPVV…FQRLTKRILT (156 aa)) are C-terminal hotdog fold. The active-site Proton donor; for dehydratase activity is the Asp1522. The interval 1625–1652 (DHHNSNEVRNGNATTTHTNPPAHATTQS) is disordered. The segment covering 1636–1650 (NATTTHTNPPAHATT) has biased composition (low complexity). Carrier domains are found at residues 1671-1748 (TVGE…AELP) and 1791-1865 (ANYA…GPNT). O-(pantetheine 4'-phosphoryl)serine is present on residues Ser1708 and Ser1825. Residues 1931–2173 (MFFLPDGTGY…TVPCDHLSIM (243 aa)) form a thioesterase (TE) domain region.

Requires pantetheine 4'-phosphate as cofactor.

Its pathway is secondary metabolite biosynthesis. Non-reducing polyketide synthase; part of the gene cluster that mediates the biosynthesis of polyesters containing 2,4-dihydroxy-6-(2-hydroxypropyl)benzoate and 3-hydroxybutyrate moieties, such as talapolyester G, 15G256beta and 15G256beta-2; as well as to oxidized derivatives such as 15G256alpha. The biosynthesis of the polyesters probably starts with the formation of the diketide 3-hydroxybutyryl-S-ACP catalyzed by the partially reducing polyketide synthase tpeA. The acceptance of 3-hydroxybutyryl by the non-reducing polyketide synthase tpeB would initiate further elongation and cyclization, catalyzed by KS and PT, respectively, to form 2,4-dihydroxy-6-(2-hydroxyn-propyl)benzoyl-S-ACP intermediate. The TE domain could catalyze lactonization at this step to yield 6-hydroxymellein as a derailment product. The polyesterification process maybe occurs when additional molecules of 3-hydroxybutyryl are transferred to tpeB. Following the first esterification step, an intramolecular cyclization catalyzed by the TE domain of tpeB would give talarodioxadione 1, whereas the ethyl esterification of talapolyester G perhaps happens spontaneously. Further oxidation by the cytochrome P450 monooxygenase tpeC then leads to the formation of oxidized derivatives. The chain is Non-reducing polyketide synthase tpeB from Talaromyces stipitatus (strain ATCC 10500 / CBS 375.48 / QM 6759 / NRRL 1006) (Penicillium stipitatum).